Here is a 449-residue protein sequence, read N- to C-terminus: tRNA (guanine(37)-N(1))-methyltransferase (449 aa).

S-adenosyl-L-methionine-binding positions include His-216, 254–255 (DL), 282–283 (DG), and Asn-345.

Belongs to the class I-like SAM-binding methyltransferase superfamily. TRM5/TYW2 family. In terms of assembly, monomer.

It localises to the mitochondrion matrix. It is found in the nucleus. The protein resides in the cytoplasm. It catalyses the reaction guanosine(37) in tRNA + S-adenosyl-L-methionine = N(1)-methylguanosine(37) in tRNA + S-adenosyl-L-homocysteine + H(+). Specifically methylates the N1 position of guanosine-37 in various cytoplasmic and mitochondrial tRNAs. Methylation is not dependent on the nature of the nucleoside 5' of the target nucleoside. This is the first step in the biosynthesis of wybutosine (yW), a modified base adjacent to the anticodon of tRNAs and required for accurate decoding. The chain is tRNA (guanine(37)-N(1))-methyltransferase from Candida albicans (strain SC5314 / ATCC MYA-2876) (Yeast).